The following is a 3096-amino-acid chain: Unconventional myosin-XVB (3096 aa).

4 disordered regions span residues Met-1 to Asp-330, Arg-389 to Arg-489, Gly-508 to Asp-540, and Ala-553 to Leu-649. Over residues Ala-19 to Ala-33 the composition is skewed to low complexity. A compositionally biased stretch (basic and acidic residues) spans Pro-34 to Pro-50. The span at Arg-124–Pro-143 shows a compositional bias: basic residues. Composition is skewed to basic and acidic residues over residues Asp-212–Glu-222 and Thr-261–Glu-288. Residues Ala-307–Asp-330 are compositionally biased toward low complexity. The span at Trp-406 to Gly-416 shows a compositional bias: basic and acidic residues. The span at His-417 to Arg-426 shows a compositional bias: basic residues. Residues Gly-427–Arg-489 show a composition bias toward basic and acidic residues. In terms of domain architecture, Myosin motor spans Glu-720 to Asp-1394. Gly-818–Thr-825 provides a ligand contact to ATP. The actin-binding stretch occupies residues Leu-1273 to Pro-1295. The 30-residue stretch at Arg-1414 to Gln-1443 folds into the IQ domain. The 152-residue stretch at Arg-1551–Trp-1702 folds into the MyTH4 1 domain. Disordered stretches follow at residues Pro-1802–Ser-1833, Met-1963–Phe-2026, and Gln-2040–Asp-2262. The span at Ser-1808–Thr-1820 shows a compositional bias: pro residues. Residues Met-1963–Ser-1980 show a composition bias toward low complexity. Residues Ala-2059–Glu-2076 are compositionally biased toward acidic residues. Basic and acidic residues predominate over residues Ala-2102 to Ala-2116. Pro residues predominate over residues Gly-2159–Pro-2170. A compositionally biased stretch (basic and acidic residues) spans Arg-2176 to Leu-2185. Pro residues-rich tracts occupy residues Met-2199–Lys-2217 and His-2247–Glu-2261. Positions Lys-2481–Ala-2542 constitute an SH3 domain. The disordered stretch occupies residues Ser-2548–Leu-2567. The 147-residue stretch at Tyr-2643–Leu-2789 folds into the MyTH4 2 domain. Positions Arg-2795–Asn-3096 constitute an FERM domain.

Belongs to the TRAFAC class myosin-kinesin ATPase superfamily. Myosin family. In terms of tissue distribution, detected in brain, stomach and kidney.

It is found in the cytoplasm. This chain is Unconventional myosin-XVB, found in Homo sapiens (Human).